The sequence spans 600 residues: NADH-quinone oxidoreductase subunit C/D (600 aa).

The tract at residues 1–190 is NADH dehydrogenase I subunit C; sequence MVNNMTDLTA…SPFELTKAKQ (190 aa). Positions 214–600 are NADH dehydrogenase I subunit D; the sequence is DFMFLNLGPN…IDFVMSDVDR (387 aa).

This sequence in the N-terminal section; belongs to the complex I 30 kDa subunit family. The protein in the C-terminal section; belongs to the complex I 49 kDa subunit family. In terms of assembly, NDH-1 is composed of 13 different subunits. Subunits NuoB, CD, E, F, and G constitute the peripheral sector of the complex.

The protein resides in the cell inner membrane. It catalyses the reaction a quinone + NADH + 5 H(+)(in) = a quinol + NAD(+) + 4 H(+)(out). Functionally, NDH-1 shuttles electrons from NADH, via FMN and iron-sulfur (Fe-S) centers, to quinones in the respiratory chain. The immediate electron acceptor for the enzyme in this species is believed to be ubiquinone. Couples the redox reaction to proton translocation (for every two electrons transferred, four hydrogen ions are translocated across the cytoplasmic membrane), and thus conserves the redox energy in a proton gradient. The chain is NADH-quinone oxidoreductase subunit C/D from Escherichia coli (strain ATCC 8739 / DSM 1576 / NBRC 3972 / NCIMB 8545 / WDCM 00012 / Crooks).